Reading from the N-terminus, the 118-residue chain is UPF0342 protein BT9727_0768 (118 aa).

It belongs to the UPF0342 family.

The polypeptide is UPF0342 protein BT9727_0768 (Bacillus thuringiensis subsp. konkukian (strain 97-27)).